A 522-amino-acid chain; its full sequence is Tyrosine-protein phosphatase 1 (522 aa).

The interval Arg-32–Ser-63 is disordered. Positions Ser-33–Ser-63 are enriched in low complexity. Positions Ile-97 to Glu-471 constitute a Tyrosine-protein phosphatase domain. Cys-310 acts as the Phosphocysteine intermediate in catalysis. The interval Met-327 to Tyr-426 is PTPase insert (Asn-rich). The span at Asn-382–Pro-410 shows a compositional bias: low complexity. The tract at residues Asn-382 to Ala-420 is disordered. Residues Asn-411 to Ala-420 show a composition bias toward acidic residues.

Belongs to the protein-tyrosine phosphatase family. Non-receptor class subfamily. As to expression, expressed predominantly in anterior-like cells and to a lesser degree in prestalk cells.

It is found in the cytoplasm. It localises to the cell membrane. It carries out the reaction O-phospho-L-tyrosyl-[protein] + H2O = L-tyrosyl-[protein] + phosphate. Its function is as follows. May have a role in growth and in the early stages of development. Affects the timing of development. This is Tyrosine-protein phosphatase 1 (ptpA1-1) from Dictyostelium discoideum (Social amoeba).